The primary structure comprises 609 residues: Threonine--tRNA ligase (609 aa).

Residues 1 to 143 (MRVLYIHAER…SFKPEGAKVE (143 aa)) form an editing domain region. 2 catalytic regions span residues 195–491 (PRYL…PRLP) and 196–491 (RYLD…PRLP). 3 residues coordinate Zn(2+): Cys288, His339, and His460.

Belongs to the class-II aminoacyl-tRNA synthetase family. In terms of assembly, homodimer. Zn(2+) serves as cofactor.

The protein resides in the cytoplasm. It carries out the reaction tRNA(Thr) + L-threonine + ATP = L-threonyl-tRNA(Thr) + AMP + diphosphate + H(+). Functionally, catalyzes the attachment of threonine to tRNA(Thr) in a two-step reaction: L-threonine is first activated by ATP to form Thr-AMP and then transferred to the acceptor end of tRNA(Thr). Also edits incorrectly charged L-seryl-tRNA(Thr). The polypeptide is Threonine--tRNA ligase (Pyrobaculum islandicum (strain DSM 4184 / JCM 9189 / GEO3)).